Here is a 482-residue protein sequence, read N- to C-terminus: Coagulation factor X (482 aa).

A signal peptide spans 1–20 (MESPVRLSLLYVVLASLLLP). Positions 21-40 (GRSVFINRERANNVLQRIRR) are excised as a propeptide. Residues 41-85 (ANSFFEEIKKGNLERECVEEICSFEEAREVFEDNEKTTEFWNKYE) form the Gla domain. 4-carboxyglutamate occurs at positions 46, 47, 54, 56, 59, 60, 65, 66, 69, 72, 75, and 79. A disulfide bridge connects residues cysteine 57 and cysteine 62. The EGF-like 1; calcium-binding domain maps to 86–122 (DGDQCESSPCQNQGECRDGLGSYTCTCTEGFEGKNCE). 11 cysteine pairs are disulfide-bonded: cysteine 90–cysteine 101, cysteine 95–cysteine 110, cysteine 112–cysteine 121, cysteine 129–cysteine 140, cysteine 136–cysteine 149, cysteine 151–cysteine 164, cysteine 172–cysteine 340, cysteine 238–cysteine 243, cysteine 259–cysteine 275, cysteine 388–cysteine 402, and cysteine 413–cysteine 441. Aspartate 103 bears the (3R)-3-hydroxyaspartate mark. The EGF-like 2 domain maps to 125–165 (VRKLCSLDNGDCDQFCREEQNSVVCSCAKGYFLGNDGKSCL). Residues 184–231 (VALNTSNSEPDPEDLMPDADILYPTESPSELLNLNKTEPEANSDDVIR) constitute a propeptide, activation peptide. Residues asparagine 187 and asparagine 218 are each glycosylated (N-linked (GlcNAc...) asparagine). In terms of domain architecture, Peptidase S1 spans 232–465 (IVGGQECKRG…FLKWIDRSMK (234 aa)). Residues histidine 274 and aspartate 320 each act as charge relay system in the active site. Serine 417 (charge relay system) is an active-site residue.

The protein belongs to the peptidase S1 family. The two chains are formed from a single-chain precursor by the excision of two Arg residues and are held together by 1 or more disulfide bonds. Forms a heterodimer with SERPINA5. Interacts with ixolaris, an anticoagulant protein from Ixodes scapularis saliva. The vitamin K-dependent, enzymatic carboxylation of some glutamate residues allows the modified protein to bind calcium. In terms of processing, N- and O-glycosylated. Post-translationally, proteolytically cleaved and activated by cathepsin CTSG. The activation peptide is cleaved by factor IXa (in the intrinsic pathway), or by factor VIIa (in the extrinsic pathway). The iron and 2-oxoglutarate dependent 3-hydroxylation of aspartate and asparagine is (R) stereospecific within EGF domains. As to expression, plasma; synthesized in the liver.

The protein resides in the secreted. It catalyses the reaction Selective cleavage of Arg-|-Thr and then Arg-|-Ile bonds in prothrombin to form thrombin.. Its activity is regulated as follows. Inhibited by SERPINA5. In terms of biological role, factor Xa is a vitamin K-dependent glycoprotein that converts prothrombin to thrombin in the presence of factor Va, calcium and phospholipid during blood clotting. Factor Xa activates pro-inflammatory signaling pathways in a protease-activated receptor (PAR)-dependent manner. This is Coagulation factor X (F10) from Rattus norvegicus (Rat).